Reading from the N-terminus, the 188-residue chain is Elongation factor P (188 aa).

Lysine 34 is modified (N6-(3,6-diaminohexanoyl)-5-hydroxylysine).

It belongs to the elongation factor P family. May be beta-lysylated on the epsilon-amino group of Lys-34 by the combined action of EpmA and EpmB, and then hydroxylated on the C5 position of the same residue by EpmC (if this protein is present). Lysylation is critical for the stimulatory effect of EF-P on peptide-bond formation. The lysylation moiety may extend toward the peptidyltransferase center and stabilize the terminal 3-CCA end of the tRNA. Hydroxylation of the C5 position on Lys-34 may allow additional potential stabilizing hydrogen-bond interactions with the P-tRNA.

The protein localises to the cytoplasm. It functions in the pathway protein biosynthesis; polypeptide chain elongation. Functionally, involved in peptide bond synthesis. Alleviates ribosome stalling that occurs when 3 or more consecutive Pro residues or the sequence PPG is present in a protein, possibly by augmenting the peptidyl transferase activity of the ribosome. Modification of Lys-34 is required for alleviation. The sequence is that of Elongation factor P from Stenotrophomonas maltophilia (strain R551-3).